The sequence spans 178 residues: Probable DNA-directed RNA polymerase subunit delta (178 aa).

Residues 14-81 (LSLIDVAHFI…GNNTWGLRAW (68 aa)) enclose the HTH HARE-type domain. Disordered regions lie at residues 89–122 (EEVQTQTTPKKKRKSDDDDDEDEEILDDDVDYDD) and 141–178 (LDEDEDDDDHLPDGIEGDLATVEDDYTDGDYTEDPEDK). Composition is skewed to acidic residues over residues 105-122 (DDDDEDEEILDDDVDYDD), 141-150 (LDEDEDDDDH), and 161-178 (TVEDDYTDGDYTEDPEDK).

It belongs to the RpoE family. RNAP is composed of a core of 2 alpha, a beta and a beta' subunits. The core is associated with a delta subunit and one of several sigma factors.

Functionally, participates in both the initiation and recycling phases of transcription. In the presence of the delta subunit, RNAP displays an increased specificity of transcription, a decreased affinity for nucleic acids, and an increased efficiency of RNA synthesis because of enhanced recycling. The protein is Probable DNA-directed RNA polymerase subunit delta of Listeria innocua serovar 6a (strain ATCC BAA-680 / CLIP 11262).